Here is a 369-residue protein sequence, read N- to C-terminus: Chorismate synthase (369 aa).

NADP(+) is bound by residues Arg-48 and Arg-54. FMN is bound by residues 125–127 (RSS), 238–239 (NA), Gly-278, 293–297 (KPTSS), and Arg-319.

This sequence belongs to the chorismate synthase family. As to quaternary structure, homotetramer. FMNH2 is required as a cofactor.

The enzyme catalyses 5-O-(1-carboxyvinyl)-3-phosphoshikimate = chorismate + phosphate. It participates in metabolic intermediate biosynthesis; chorismate biosynthesis; chorismate from D-erythrose 4-phosphate and phosphoenolpyruvate: step 7/7. In terms of biological role, catalyzes the anti-1,4-elimination of the C-3 phosphate and the C-6 proR hydrogen from 5-enolpyruvylshikimate-3-phosphate (EPSP) to yield chorismate, which is the branch point compound that serves as the starting substrate for the three terminal pathways of aromatic amino acid biosynthesis. This reaction introduces a second double bond into the aromatic ring system. The sequence is that of Chorismate synthase from Cupriavidus necator (strain ATCC 17699 / DSM 428 / KCTC 22496 / NCIMB 10442 / H16 / Stanier 337) (Ralstonia eutropha).